The chain runs to 1316 residues: DNA-directed RNA polymerase subunit beta' (1316 aa).

The Zn(2+) site is built by cysteine 60, cysteine 62, cysteine 75, and cysteine 78. Positions 535, 537, and 539 each coordinate Mg(2+). Zn(2+)-binding residues include cysteine 891, cysteine 968, cysteine 975, and cysteine 978.

Belongs to the RNA polymerase beta' chain family. In terms of assembly, the RNAP catalytic core consists of 2 alpha, 1 beta, 1 beta' and 1 omega subunit. When a sigma factor is associated with the core the holoenzyme is formed, which can initiate transcription. Mg(2+) serves as cofactor. Requires Zn(2+) as cofactor.

The catalysed reaction is RNA(n) + a ribonucleoside 5'-triphosphate = RNA(n+1) + diphosphate. In terms of biological role, DNA-dependent RNA polymerase catalyzes the transcription of DNA into RNA using the four ribonucleoside triphosphates as substrates. The protein is DNA-directed RNA polymerase subunit beta' of Mycobacterium ulcerans (strain Agy99).